The sequence spans 856 residues: Leucine--tRNA ligase (856 aa).

Residues 42 to 52 (PYPSGKLHMGH) carry the 'HIGH' region motif. The short motif at 615–619 (KMSKS) is the 'KMSKS' region element. Lys618 serves as a coordination point for ATP.

Belongs to the class-I aminoacyl-tRNA synthetase family.

The protein resides in the cytoplasm. The enzyme catalyses tRNA(Leu) + L-leucine + ATP = L-leucyl-tRNA(Leu) + AMP + diphosphate. This chain is Leucine--tRNA ligase, found in Chromohalobacter salexigens (strain ATCC BAA-138 / DSM 3043 / CIP 106854 / NCIMB 13768 / 1H11).